Reading from the N-terminus, the 311-residue chain is Syntaxin-111 (311 aa).

Over 1–284 (MNDLMTKSFM…AREHQRSSRK (284 aa)) the chain is Cytoplasmic. A t-SNARE coiled-coil homology domain is found at 213–275 (VHEIQDRHDA…QGGNKELRKA (63 aa)). The helical; Anchor for type IV membrane protein transmembrane segment at 285–305 (WLCIGIIILLLLVLLVIVPIA) threads the bilayer. Residues 306–311 (TSFKRS) are Vesicular-facing.

This sequence belongs to the syntaxin family. In terms of tissue distribution, expressed in roots and panicles.

It is found in the cell membrane. Its subcellular location is the cytoplasm. Vesicle trafficking protein that functions in the secretory pathway. In Oryza sativa subsp. japonica (Rice), this protein is Syntaxin-111.